Reading from the N-terminus, the 359-residue chain is MIAIPSDRLDAILARHDIVTATLSAGEADSESFVQLSRELSDLDDVVAAIRAYRAADAELRGVEAMLEEGDPEMRALAAEEKPEVEAARDAAAKALQILLLPKDSADEKSAILEIRAGTGGDEAALFAGDLFRMYARYADLKGWKVEVVSESPGTMGGYREVVAEVKGRGVFARLKFESGAHRVQRVPETETQGRIHTSAATVAVLPEAEEVDIHVNEADLKIDTMRAQGAGGQHVNKTESAIRITHMPSGIVVFVQEERSQHKNRARAMAVLRARLYEQERSQKDAARAADRRAQVGSGDRSERIRTYNFPQGRVTDHRINLTLYKLEEVLAGTALDELVDALVTEHQAALLAAEGLG.

Residue Gln234 is modified to N5-methylglutamine. Residues Ser283–Arg305 are disordered.

The protein belongs to the prokaryotic/mitochondrial release factor family. Post-translationally, methylated by PrmC. Methylation increases the termination efficiency of RF1.

The protein localises to the cytoplasm. Functionally, peptide chain release factor 1 directs the termination of translation in response to the peptide chain termination codons UAG and UAA. This chain is Peptide chain release factor 1, found in Methylobacterium nodulans (strain LMG 21967 / CNCM I-2342 / ORS 2060).